Here is a 150-residue protein sequence, read N- to C-terminus: Urease accessory protein UreE (150 aa).

The protein belongs to the UreE family.

It localises to the cytoplasm. In terms of biological role, involved in urease metallocenter assembly. Binds nickel. Probably functions as a nickel donor during metallocenter assembly. The chain is Urease accessory protein UreE from Staphylococcus saprophyticus subsp. saprophyticus (strain ATCC 15305 / DSM 20229 / NCIMB 8711 / NCTC 7292 / S-41).